The following is a 196-amino-acid chain: MLEQIKNNFTESIQTQIAASELLGPSIEHAGMMMVQCLLGGNKIISCGNGGSAGHAQHFCAQLLNKYETERPSLPAISLNSDISTITSIANDYQYDEVFSKQIRALGHNGDVLLAISTSGNSRNVVKAIESAVSRDIPIIALTGFDGGDISGLLGEGDVEIRVPSARTSRIQEVHLVVLHSLCEIIDTTLFPQGDS.

Residues 34-192 form the SIS domain; the sequence is MVQCLLGGNK…CEIIDTTLFP (159 aa). 49–51 is a substrate binding site; the sequence is NGG. Zn(2+) contacts are provided by His-58 and Gln-62. Residues Gln-62, 91-92, 117-119, Ser-122, and Gln-172 contribute to the substrate site; these read ND and STS. Zn(2+) contacts are provided by Gln-172 and His-180.

This sequence belongs to the SIS family. GmhA subfamily. In terms of assembly, homotetramer. The cofactor is Zn(2+).

The protein localises to the cytoplasm. It catalyses the reaction 2 D-sedoheptulose 7-phosphate = D-glycero-alpha-D-manno-heptose 7-phosphate + D-glycero-beta-D-manno-heptose 7-phosphate. It participates in carbohydrate biosynthesis; D-glycero-D-manno-heptose 7-phosphate biosynthesis; D-glycero-alpha-D-manno-heptose 7-phosphate and D-glycero-beta-D-manno-heptose 7-phosphate from sedoheptulose 7-phosphate: step 1/1. In terms of biological role, catalyzes the isomerization of sedoheptulose 7-phosphate in D-glycero-D-manno-heptose 7-phosphate. The chain is Phosphoheptose isomerase from Colwellia psychrerythraea (strain 34H / ATCC BAA-681) (Vibrio psychroerythus).